The following is a 418-amino-acid chain: Hydroxysteroid dehydrogenase-like protein 2 (418 aa).

NADP(+) is bound by residues 17-23 (GASRGIG), Lys42, and Asp74. Lys42 carries the post-translational modification N6-(2-hydroxyisobutyryl)lysine. Lys116 is subject to N6-acetyllysine. Tyr168 functions as the Proton acceptor in the catalytic mechanism. Residue Lys172 participates in NADP(+) binding. The SCP2 domain occupies 306–415 (RSGAVEETFR…KLEKLMNQMN (110 aa)). At Lys318 the chain carries N6-succinyllysine.

The protein belongs to the short-chain dehydrogenases/reductases (SDR) family. Ubiquitous.

The protein localises to the peroxisome. The protein resides in the mitochondrion. Has apparently no steroid dehydrogenase activity. Controls bile acid (BA) and lipid metabolism in response to nutritional cues. This Homo sapiens (Human) protein is Hydroxysteroid dehydrogenase-like protein 2.